Reading from the N-terminus, the 559-residue chain is Phosphatase and actin regulator 3 (559 aa).

The disordered stretch occupies residues 1–65 (MAASEDGSGC…GIRTPPVRRN (65 aa)). Over residues 15–24 (GRSQSDPSVL) the composition is skewed to polar residues. Positions 25 to 35 (TDSSATSSADA) are enriched in low complexity. Phosphothreonine is present on Thr-70. Residues 82–342 (KKKNEKLKQT…VERGKEREEA (261 aa)) form a disordered region. An RPEL 1 repeat occupies 93-118 (SALEKKMAGRQGREELIKKGLLEMME). The segment covering 95-113 (LEKKMAGRQGREELIKKGL) has biased composition (basic and acidic residues). Positions 134 to 151 (SVQSEPPTPKSETLTSED) are enriched in polar residues. The segment covering 229–240 (PSPPLLPTPPPK) has biased composition (pro residues). Position 230 is a phosphoserine (Ser-230). Phosphothreonine is present on Thr-236. Polar residues-rich tracts occupy residues 248 to 262 (NVTG…SSMK) and 270 to 281 (GQLSTPTGSPHL). The span at 293-342 (VIEELHRALATKHRQDSFQGRESKGSPKKRLDVRLSRTSSVERGKEREEA) shows a compositional bias: basic and acidic residues. A coiled-coil region spans residues 346–369 (DGALENKRTAAKESEENKENLIIN). RPEL repeat units lie at residues 401-426 (ELLA…PRRT), 439-464 (MKLS…KQRN), and 477-502 (QRLT…IRFS). Positions 438–518 (EMKLSKRLSQ…KAQDYDRRAD (81 aa)) are required for PP1CA binding and inhibition of PP1 activity. A coiled-coil region spans residues 450–486 (AVEELERRNILKQRNDQTEQEERREIKQRLTRKLNQR).

The protein belongs to the phosphatase and actin regulator family. In terms of assembly, binds actin and PPP1CA; thus inhibiting the protein phosphatase 1 (PP1) activity. As to expression, abundantly expressed in brain. Also found in several tumors such as lung carcinomas, nervous tumors and HL-60 leukemia cells. Isoform 3 is the major form in U-937, GOTO and HL-60 leukemia cells.

It is found in the nucleus matrix. The chain is Phosphatase and actin regulator 3 (PHACTR3) from Homo sapiens (Human).